We begin with the raw amino-acid sequence, 315 residues long: Glycine--tRNA ligase alpha subunit (315 aa).

This sequence belongs to the class-II aminoacyl-tRNA synthetase family. Tetramer of two alpha and two beta subunits.

It localises to the cytoplasm. The enzyme catalyses tRNA(Gly) + glycine + ATP = glycyl-tRNA(Gly) + AMP + diphosphate. This Sorangium cellulosum (strain So ce56) (Polyangium cellulosum (strain So ce56)) protein is Glycine--tRNA ligase alpha subunit.